Reading from the N-terminus, the 389-residue chain is Chaperone protein DnaJ (389 aa).

Residues 6–70 enclose the J domain; it reads DYYEILGLSK…EKRAQYDRFG (65 aa). The CR-type zinc finger occupies 131-213; sequence GVRKDIDIPR…CSGAGRVRSR (83 aa). Positions 144, 147, 161, 164, 187, 190, 201, and 204 each coordinate Zn(2+). CXXCXGXG motif repeat units lie at residues 144–151, 161–168, 187–194, and 201–208; these read CSTCSGTG, CPNCGGTG, CSACHGRG, and CPTCSGAG. The segment at 145–167 is disordered; the sequence is STCSGTGAKPGTSPKRCPNCGGT. The disordered stretch occupies residues 351 to 389; it reads LSNGKKPEAEERSRSDKQKSEKPRKSKGLFEKVKDAFES. A compositionally biased stretch (basic and acidic residues) spans 355-389; that stretch reads KKPEAEERSRSDKQKSEKPRKSKGLFEKVKDAFES.

It belongs to the DnaJ family. In terms of assembly, homodimer. Zn(2+) is required as a cofactor.

Its subcellular location is the cytoplasm. Participates actively in the response to hyperosmotic and heat shock by preventing the aggregation of stress-denatured proteins and by disaggregating proteins, also in an autonomous, DnaK-independent fashion. Unfolded proteins bind initially to DnaJ; upon interaction with the DnaJ-bound protein, DnaK hydrolyzes its bound ATP, resulting in the formation of a stable complex. GrpE releases ADP from DnaK; ATP binding to DnaK triggers the release of the substrate protein, thus completing the reaction cycle. Several rounds of ATP-dependent interactions between DnaJ, DnaK and GrpE are required for fully efficient folding. Also involved, together with DnaK and GrpE, in the DNA replication of plasmids through activation of initiation proteins. The protein is Chaperone protein DnaJ of Methanosarcina mazei (strain ATCC BAA-159 / DSM 3647 / Goe1 / Go1 / JCM 11833 / OCM 88) (Methanosarcina frisia).